Reading from the N-terminus, the 261-residue chain is Chloroplastic import inner membrane translocase subunit HP30-1 (261 aa).

The next 4 membrane-spanning stretches (helical) occupy residues 59-77 (AAVV…GGLM), 113-129 (NFAA…SVMK), 139-155 (SAVV…SLVS), and 163-180 (MNAI…GVFF).

The protein belongs to the Tim17/Tim22/Tim23 family. As to quaternary structure, probable component of a protein-conducting channel made of HP30-1, HP30-2 and HP20 that mediates the import of transit sequence-less proteins into the chloroplastic inner membrane. Interacts with CEQORH.

The protein resides in the plastid. It is found in the chloroplast inner membrane. Together with HP30-2 and HP20, triggers the import and insertion of transit sequence-less multi-pass transmembrane proteins (e.g. CEQORH) into the chloroplastic inner membrane. The polypeptide is Chloroplastic import inner membrane translocase subunit HP30-1 (Arabidopsis thaliana (Mouse-ear cress)).